The following is a 481-amino-acid chain: F-box/FBD/LRR-repeat protein At5g18770 (481 aa).

Residues 23–69 (EDMISALPDHLLCHILIFLSTDESVLTSVLSSRWRNLWKWVPRLDLN) form the F-box domain. LRR repeat units lie at residues 126–153 (KPNVRHFQVESDLLEHWCTSEIRLTLSA), 159–185 (CLKLHLVWLNDFESLSLPCLKIMYLED), 186–211 (VVFPSDAAAETLISCSPVLEDLKLSL), 214–234 (DDVVVVLRVYSQSLKSFTLKR), 236–261 (VPVYAINGAHTVLVDTPRLVYMSLID), 289–314 (DELSERNIVYDLLNNFSGVRNMTISW), and 340–368 (ATMSSDASLEVLRIVLESCPKLKHFHFTL). The FBD domain occupies 378–430 (VITGFSRVLPRCLVFSLESVEMESPITEKATELKLVRYFLENSATLKKLVLLL).

The polypeptide is F-box/FBD/LRR-repeat protein At5g18770 (Arabidopsis thaliana (Mouse-ear cress)).